We begin with the raw amino-acid sequence, 563 residues long: Kdo(2)-lipid A phosphoethanolamine 7''-transferase (563 aa).

The Cytoplasmic segment spans residues 1-9 (MRYIKSITQ). The helical transmembrane segment at 10–30 (QKLSFLLAIYIGLFMNGAVFY) threads the bilayer. The Periplasmic segment spans residues 31-48 (RRFGSYAHDFTVWKGISA). Residues 49–69 (VVELAATVLVTFFLLRLLSLF) traverse the membrane as a helical segment. Over 70-79 (GRRSWRILAS) the chain is Cytoplasmic. A helical transmembrane segment spans residues 80–100 (LVVLFSAGASYYMTFLNVVIG). At 101–117 (YGIIASVMTTDIDLSKE) the chain is on the periplasmic side. A helical membrane pass occupies residues 118-138 (VVGLNFILWLIAVSALPLILI). Over 139–159 (WNNRCRYTLLRQLRTPGQRIR) the chain is Cytoplasmic. Residues 160–180 (SLAVVVLAGIMVWAPIRLLDI) traverse the membrane as a helical segment. Over 181 to 563 (QQKKVERATG…IPQAKEAAAN (383 aa)) the chain is Periplasmic.

Belongs to the phosphoethanolamine transferase family. EptB subfamily. Ca(2+) serves as cofactor.

It localises to the cell inner membrane. The enzyme catalyses alpha-Kdo-(2-&gt;4)-alpha-Kdo-(2-&gt;6)-lipid A (E. coli) + a 1,2-diacyl-sn-glycero-3-phosphoethanolamine = 7-O-[2-aminoethoxy(hydroxy)phosphoryl]-alpha-Kdo-(2-&gt;4)-alpha-Kdo-(2-&gt;6)-lipid A + a 1,2-diacyl-sn-glycerol. It carries out the reaction alpha-Kdo-(2-&gt;4)-alpha-Kdo-(2-&gt;6)-lipid IVA (E. coli) + a 1,2-diacyl-sn-glycero-3-phosphoethanolamine = 7-O-[2-aminoethoxy(hydroxy)phosphoryl]-alpha-Kdo-(2-&gt;4)-alpha-Kdo-(2-&gt;6)-lipid IVA (E. coli) + a 1,2-diacyl-sn-glycerol. Inhibited by calcium concentrations higher than 1 mM. In terms of biological role, catalyzes the addition of a phosphoethanolamine (pEtN) moiety to the outer 3-deoxy-D-manno-octulosonic acid (Kdo) residue of a Kdo(2)-lipid A. Phosphatidylethanolamines with one unsaturated acyl group function as pEtN donors and the reaction releases diacylglycerol. The chain is Kdo(2)-lipid A phosphoethanolamine 7''-transferase (eptB) from Escherichia coli (strain K12).